The following is a 348-amino-acid chain: Keratocan (348 aa).

An N-terminal signal peptide occupies residues methionine 1–serine 26. Residues alanine 40–proline 69 enclose the LRRNT domain. Disulfide bonds link cysteine 41–cysteine 47 and cysteine 45–cysteine 57. LRR repeat units lie at residues proline 70–asparagine 92, alanine 93–alanine 118, methionine 119–proline 140, alanine 141–glycine 163, glycine 165–glycine 189, leucine 190–threonine 213, threonine 215–glycine 234, leucine 235–leucine 260, serine 262–serine 280, and serine 281–proline 303. The N-linked (GlcNAc...) (keratan sulfate) asparagine glycan is linked to asparagine 92. Residue asparagine 259 is glycosylated (N-linked (GlcNAc...) (keratan sulfate) asparagine). Residue asparagine 297 is glycosylated (N-linked (GlcNAc...) asparagine). Cysteine 302 and cysteine 339 are oxidised to a cystine.

Belongs to the small leucine-rich proteoglycan (SLRP) family. SLRP class II subfamily. In terms of processing, glycosylated. Contains keratan sulfate chains. In terms of tissue distribution, expressed in eye, where it is found in the corneal epithelial layer and to a lesser extent in the stromal layer (at protein level).

It is found in the secreted. It localises to the extracellular space. The protein localises to the extracellular matrix. Its function is as follows. May be important in developing and maintaining corneal transparency and for the structure of the stromal matrix. This chain is Keratocan, found in Danio rerio (Zebrafish).